Reading from the N-terminus, the 204-residue chain is Inner membrane protein BB_0250 (204 aa).

Transmembrane regions (helical) follow at residues 17-37 (IAYSPIVFFSLLILAGLNVPI), 58-78 (ILIFLGIFWGAYLGDIISFYI), 101-121 (YYYGQYGVLTLFIGRFIPFGV), 139-159 (FIVSDFFATLLSIVVYFTLSF), and 172-192 (IKIIIFAIFIAVIATTIIIYV).

It belongs to the DedA family.

The protein resides in the cell inner membrane. Required for proper cell division and envelope integrity. The sequence is that of Inner membrane protein BB_0250 from Borreliella burgdorferi (strain ATCC 35210 / DSM 4680 / CIP 102532 / B31) (Borrelia burgdorferi).